Consider the following 122-residue polypeptide: UPF0102 protein CLL_A1253 (122 aa).

Belongs to the UPF0102 family.

The protein is UPF0102 protein CLL_A1253 of Clostridium botulinum (strain Eklund 17B / Type B).